Here is a 288-residue protein sequence, read N- to C-terminus: Peroxisomal membrane protein pex13 (288 aa).

The interval 1–32 is disordered; sequence METNQNEKGPSLPSYPAGGIMSVSNSNADTNQ. Positions 22–32 are enriched in polar residues; the sequence is SVSNSNADTNQ. Residues 178–198 traverse the membrane as a helical segment; the sequence is IYSIVSSLAIILGLVGLPYAI. Residues 222-288 form the SH3 domain; that stretch reads DSLEFCKADY…PSNYCSIISR (67 aa).

This sequence belongs to the peroxin-13 family. As to quaternary structure, interacts (via SH3 domain) with PEX14 (via SH3-binding motif); forming the PEX13-PEX14 docking complex.

The protein resides in the peroxisome membrane. Functionally, component of the PEX13-PEX14 docking complex, a translocon channel that specifically mediates the import of peroxisomal cargo proteins bound to PEX5 receptor. The PEX13-PEX14 docking complex forms a large import pore which can be opened to a diameter of about 9 nm. Mechanistically, PEX5 receptor along with cargo proteins associates with the PEX14 subunit of the PEX13-PEX14 docking complex in the cytosol, leading to the insertion of the receptor into the organelle membrane with the concomitant translocation of the cargo into the peroxisome matrix. The polypeptide is Peroxisomal membrane protein pex13 (pex13) (Schizosaccharomyces pombe (strain 972 / ATCC 24843) (Fission yeast)).